The following is a 328-amino-acid chain: Carbonic anhydrase, chloroplastic (328 aa).

Over residues 1-15 (MSTSSINGFSLSSLS) the composition is skewed to low complexity. Positions 1-26 (MSTSSINGFSLSSLSPAKTSTKRTTL) are disordered. A chloroplast-targeting transit peptide spans 1–70 (MSTSSINGFS…IITPVLREEM (70 aa)).

Belongs to the beta-class carbonic anhydrase family. Homohexamer.

The protein localises to the plastid. It localises to the chloroplast stroma. It catalyses the reaction hydrogencarbonate + H(+) = CO2 + H2O. Functionally, reversible hydration of carbon dioxide. The protein is Carbonic anhydrase, chloroplastic of Pisum sativum (Garden pea).